The following is a 154-amino-acid chain: Protein-export protein SecB (154 aa).

The protein belongs to the SecB family. In terms of assembly, homotetramer, a dimer of dimers. One homotetramer interacts with 1 SecA dimer.

The protein resides in the cytoplasm. Its function is as follows. One of the proteins required for the normal export of preproteins out of the cell cytoplasm. It is a molecular chaperone that binds to a subset of precursor proteins, maintaining them in a translocation-competent state. It also specifically binds to its receptor SecA. The protein is Protein-export protein SecB of Buchnera aphidicola subsp. Schizaphis graminum (strain Sg).